The chain runs to 77 residues: uncharacterized protein (77 aa).

This is an uncharacterized protein from Xylella fastidiosa (strain 9a5c).